Here is a 313-residue protein sequence, read N- to C-terminus: Hydroxyphenylpyruvate reductase (313 aa).

Residues 152 to 155, 174 to 176, and Ile-230 each bind NADP(+); these read LGRI and SRS. Residue Arg-232 is part of the active site. An NADP(+)-binding site is contributed by Asp-256. Glu-261 is a catalytic residue. His-279 (proton donor) is an active-site residue.

It belongs to the D-isomer specific 2-hydroxyacid dehydrogenase family.

It catalyses the reaction (2R)-2-hydroxy-3-(4-hydroxyphenyl)propanoate + NAD(+) = 3-(4-hydroxyphenyl)pyruvate + NADH + H(+). The enzyme catalyses (2R)-2-hydroxy-3-(4-hydroxyphenyl)propanoate + NADP(+) = 3-(4-hydroxyphenyl)pyruvate + NADPH + H(+). The catalysed reaction is (2R)-3-(3,4-dihydroxyphenyl)lactate + NADP(+) = 3-(3,4-dihydroxyphenyl)pyruvate + NADPH + H(+). It carries out the reaction (2R)-3-(3,4-dihydroxyphenyl)lactate + NAD(+) = 3-(3,4-dihydroxyphenyl)pyruvate + NADH + H(+). Functionally, catalyzes the NAD(P)H-dependent reduction of 4-hydroxyphenylpyruvate to 4-hydroxyphenyllactate and 3,4-dihydroxyphenylpyruvate to 3,4-dihydroxyphenyllactate in the biosynthesis of rosmarinic acid. Rosmarinic acid is an ester of caffeic acid and 3,4-dihydroxyphenyllactic acid. NADP is the preferred substrate. In Plectranthus scutellarioides (Coleus), this protein is Hydroxyphenylpyruvate reductase (HPPR).